Reading from the N-terminus, the 725-residue chain is Ribonuclease R (725 aa).

Positions 236 to 559 (RKDLRDKLII…QLHRLIKQMV (324 aa)) constitute an RNB domain. The S1 motif domain maps to 611–689 (GKSLKAQIVS…NLGKVDVVLE (79 aa)).

The protein belongs to the RNR ribonuclease family. RNase R subfamily.

The protein localises to the cytoplasm. It catalyses the reaction Exonucleolytic cleavage in the 3'- to 5'-direction to yield nucleoside 5'-phosphates.. In terms of biological role, 3'-5' exoribonuclease that releases 5'-nucleoside monophosphates and is involved in maturation of structured RNAs. The protein is Ribonuclease R of Mycoplasmopsis pulmonis (strain UAB CTIP) (Mycoplasma pulmonis).